The following is a 667-amino-acid chain: Smc-like protein Sph2 (667 aa).

2 coiled-coil regions span residues 153 to 295 (GSIQ…SLAT) and 355 to 517 (GRLD…AITA).

This sequence belongs to the Sph1/Sph2 family.

Its subcellular location is the cytoplasm. May play a role in replication. The protein is Smc-like protein Sph2 (sph2) of Halobacterium salinarum (strain ATCC 29341 / DSM 671 / R1).